A 715-amino-acid polypeptide reads, in one-letter code: Putative pentatricopeptide repeat-containing protein At3g23330 (715 aa).

13 PPR repeats span residues 38–68, 69–103, 104–138, 139–172, 206–240, 241–275, 276–306, 307–341, 342–376, 377–407, 408–442, 443–473, and 479–509; these read SHTSASIVISIYTNLKLLHEALLLFKTLKSP, PVLAWKSVIRCFTDQSLFSKALASFVEMRASGRCP, DHNVFPSVLKSCTMMMDLRFGESVHGFIVRLGMDC, DLYTGNALMNMYAKLLGMGSKISVGNVFDEMPQR, DVVSYNTIIAGYAQSGMYEDALRMVREMGTTDLKP, DSFTLSSVLPIFSEYVDVIKGKEIHGYVIRKGIDS, DVYIGSSLVDMYAKSARIEDSERVFSRLYCR, DGISWNSLVAGYVQNGRYNEALRLFRQMVTAKVKP, GAVAFSSVIPACAHLATLHLGKQLHGYVLRGGFGS, NIFIASALVDMYSKCGNIKAARKIFDRMNVL, DEVSWTAIIMGHALHGHGHEAVSLFEEMKRQGVKP, NQVAFVAVLTACSHVGLVDEAWGYFNSMTKV, and ELEHYAAVADLLGRAGKLEEAYNFISKMCVE. A type E motif region spans residues 514–589; that stretch reads VWSTLLSSCS…KPACSWIEMK (76 aa). A type E(+) motif region spans residues 590–620; it reads NKTHGFVSGDRSHPSMDKINEFLKAVMEQME. The segment at 621–715 is type DYW motif; that stretch reads KEGYVADTSG…RGNCSCGDYW (95 aa).

This sequence belongs to the PPR family. PCMP-H subfamily.

In Arabidopsis thaliana (Mouse-ear cress), this protein is Putative pentatricopeptide repeat-containing protein At3g23330 (PCMP-H32).